Consider the following 164-residue polypeptide: Large ribosomal subunit protein uL15 (164 aa).

Over residues Met1–Arg33 the composition is skewed to basic residues. Disordered stretches follow at residues Met1 to Glu59 and Ala137 to Asn164. Positions Ala34–Asn43 are enriched in basic and acidic residues. Residues Gly153 to Asn164 show a composition bias toward acidic residues.

Belongs to the universal ribosomal protein uL15 family. In terms of assembly, part of the 50S ribosomal subunit.

In terms of biological role, binds to the 23S rRNA. The sequence is that of Large ribosomal subunit protein uL15 from Haloquadratum walsbyi (strain DSM 16790 / HBSQ001).